We begin with the raw amino-acid sequence, 172 residues long: Adenine phosphoribosyltransferase (172 aa).

The protein belongs to the purine/pyrimidine phosphoribosyltransferase family. In terms of assembly, homodimer.

The protein resides in the cytoplasm. The enzyme catalyses AMP + diphosphate = 5-phospho-alpha-D-ribose 1-diphosphate + adenine. It participates in purine metabolism; AMP biosynthesis via salvage pathway; AMP from adenine: step 1/1. Its function is as follows. Catalyzes a salvage reaction resulting in the formation of AMP, that is energically less costly than de novo synthesis. This chain is Adenine phosphoribosyltransferase, found in Prochlorococcus marinus (strain MIT 9313).